A 629-amino-acid chain; its full sequence is tRNA uridine 5-carboxymethylaminomethyl modification enzyme MnmG (629 aa).

FAD is bound at residue 13 to 18; that stretch reads GGGHAG. 273 to 287 provides a ligand contact to NAD(+); the sequence is GPRYCPSIEDKITRF.

Belongs to the MnmG family. In terms of assembly, homodimer. Heterotetramer of two MnmE and two MnmG subunits. The cofactor is FAD.

It is found in the cytoplasm. Its function is as follows. NAD-binding protein involved in the addition of a carboxymethylaminomethyl (cmnm) group at the wobble position (U34) of certain tRNAs, forming tRNA-cmnm(5)s(2)U34. This is tRNA uridine 5-carboxymethylaminomethyl modification enzyme MnmG from Aeromonas hydrophila subsp. hydrophila (strain ATCC 7966 / DSM 30187 / BCRC 13018 / CCUG 14551 / JCM 1027 / KCTC 2358 / NCIMB 9240 / NCTC 8049).